The chain runs to 1782 residues: Vitellogenin (1782 aa).

The N-terminal stretch at 1–15 (MKLFVLAAIIAAVSS) is a signal peptide. The Vitellogenin domain occupies 34–812 (WQVGKQYRYE…SEDSLLPKDF (779 aa)). 2 disordered regions span residues 333 to 367 (HYES…SRRS) and 379 to 406 (VLKK…INDD). Positions 344–358 (ESHEFNFPEQHEHPH) are enriched in basic and acidic residues. Over residues 386-400 (ESSSGSSSSSADSSS) the composition is skewed to low complexity. 5 N-linked (GlcNAc...) asparagine glycosylation sites follow: N569, N587, N1357, N1463, and N1596. One can recognise a VWFD domain in the interval 1449–1638 (PYCSIDGTRI…AYSLNEENSD (190 aa)). C1451 and C1602 are joined by a disulfide.

In terms of assembly, heterotetramer of two heavy and two light chains. Glycosylated and phosphorylated. In terms of tissue distribution, detected in oocytes (at protein level). Produced by the fat body, where it is cleaved before being secreted into hemolymph. Sequestered then by a single class of receptor mediated endocytosis in the ovary.

The protein localises to the secreted. It is found in the cytoplasm. It localises to the cytoplasmic granule. Its function is as follows. Precursor of the egg-yolk proteins that are sources of nutrients during embryonic development. The chain is Vitellogenin (VG) from Bombyx mori (Silk moth).